We begin with the raw amino-acid sequence, 393 residues long: MSSTVSNPQGILQPGSFLLPESESMKKEEAELVSVCWNQDSSCFAAGTSHGFRIYNCEPFKETFRRELKDGGFKIVEMLFRSNILALVGGGPNSQYPSSKVLIWDDHQSRCISEFAFRSEIRAVKLRRDRIVVVLEHKIYVYNFMDLRLLHQIETQANPRGLCCLSHHSNTSVLACPGLNRGEIRVEHFGLNMVQIINAHDSSIACMTLTLDGLLLATASTKGTLIRIFNTMDGTRLQEVRRGVDRADIYSIALSPNVQWLAVSSDKGTVHIFSLRVRVVGEDSYSTENGALLTQQNYSNSLQGLVSPTIGTNPGSSLSFMRGVLPKYFSSEWSYAQFHVSEVTQFFAAFGSNNTVAIIGMDGSFYRCSFDPVNGGEMGQLEYIHFMKMDNRP.

4 WD repeats span residues 27-65 (KEEAELVSVCWNQDSSCFAAGTSHGFRIYNCEPFKETFR), 70-114 (DGGF…CISE), 199-239 (AHDS…RLQE), and 244-283 (VDRADIYSIALSPNVQWLAVSSDKGTVHIFSLRVRVVGED).

Belongs to the WD repeat PROPPIN family. Component of the PI(3,5)P2 regulatory complex at least composed of ATG18, SAC/FIG4, FAB1 and VAC14. In terms of tissue distribution, expressed in roots, stems, flowers and leaves.

The protein localises to the preautophagosomal structure membrane. The protein resides in the vacuole membrane. The PI(3,5)P2 regulatory complex regulates both the synthesis and turnover of phosphatidylinositol 3,5-bisphosphate (PtdIns(3,5)P2). Required for autophagy. The polypeptide is Autophagy-related protein 18c (ATG18C) (Arabidopsis thaliana (Mouse-ear cress)).